The chain runs to 466 residues: 3-isopropylmalate dehydratase large subunit (466 aa).

C347, C407, and C410 together coordinate [4Fe-4S] cluster.

Belongs to the aconitase/IPM isomerase family. LeuC type 1 subfamily. In terms of assembly, heterodimer of LeuC and LeuD. [4Fe-4S] cluster is required as a cofactor.

The enzyme catalyses (2R,3S)-3-isopropylmalate = (2S)-2-isopropylmalate. The protein operates within amino-acid biosynthesis; L-leucine biosynthesis; L-leucine from 3-methyl-2-oxobutanoate: step 2/4. Functionally, catalyzes the isomerization between 2-isopropylmalate and 3-isopropylmalate, via the formation of 2-isopropylmaleate. In Klebsiella pneumoniae subsp. pneumoniae (strain ATCC 700721 / MGH 78578), this protein is 3-isopropylmalate dehydratase large subunit.